A 140-amino-acid polypeptide reads, in one-letter code: Austinoid biosynthesis clusters protein S (140 aa).

It belongs to the trt14 isomerase family. In terms of assembly, homodimer.

Its pathway is secondary metabolite biosynthesis; terpenoid biosynthesis. Part of the gene cluster B that mediates the biosynthesis of austinol and dehydroaustinol, two fungal meroterpenoids. The first step of the pathway is the synthesis of 3,5-dimethylorsellinic acid by the polyketide synthase ausA. 3,5-dimethylorsellinic acid is then prenylated by the polyprenyl transferase ausN. Further epoxidation by the FAD-dependent monooxygenase ausM and cyclization by the probable terpene cyclase ausL lead to the formation of protoaustinoid A. Protoaustinoid A is then oxidized to spiro-lactone preaustinoid A3 by the combined action of the FAD-binding monooxygenases ausB and ausC, and the dioxygenase ausE. Acid-catalyzed keto-rearrangement and ring contraction of the tetraketide portion of preaustinoid A3 by ausJ lead to the formation of preaustinoid A4. The aldo-keto reductase ausK, with the help of ausH, is involved in the next step by transforming preaustinoid A4 into isoaustinone which is in turn hydroxylated by the P450 monooxygenase ausI to form austinolide. Finally, the cytochrome P450 monooxygenase ausG modifies austinolide to austinol. Austinol can be further modified to dehydroaustinol which forms a diffusible complex with diorcinol that initiates conidiation. Due to genetic rearrangements of the clusters and the subsequent loss of some enzymes, the end products of the Emericella nidulans austinoid biosynthesis clusters are austinol and dehydroaustinol, even if additional enzymes, such as the O-acetyltransferase ausQ and the cytochrome P450 monooxygenase ausR are still functional. AusS is necessary for austinoids production and may play a possible function as a regulator. The polypeptide is Austinoid biosynthesis clusters protein S (Emericella nidulans (strain FGSC A4 / ATCC 38163 / CBS 112.46 / NRRL 194 / M139) (Aspergillus nidulans)).